Here is a 780-residue protein sequence, read N- to C-terminus: MNPERSEYIEIPVLPLRDVVIYPYMVIPLFVGRDKSIKCIEASMNKNKKIMLVTQKEAEIDEPTDNDLFTIGTTASILQMLKLPDGTVKVLVEGLQRAKVKKINNENGYFTAQIQLICTPEITEKEQSILIRTTLNQFENYVKFNKKISPEILNSLNNITNASQLSDMIAIHMPLKLSEKQSILETYNTNERLERLMAIMESEIDLLQVEKRIRNRVKKQMEKSQREYYLNEQMKAIQKELGEMDETLDEHEILKRKITTIKMPKEAQEKMASELHKLKMMSPMSAEATVVRSYIDWMIQIPWNIRSKVKKNLTQAQKILDSDHFGLDKVKERILEYLAVQSRINTVKGPILCLVGPPGVGKTSLGQSIARATGRKYIRMALGGIRDEAEIRGHRRTYIGSMPGKIIQKMAKVGVKNPLFLLDEIDKMSCDIRVDPASALLEVLDPEQNVAFNDHYLEVDYDLSNVMFIATSNSTNIPAPLLDRMEIIRISGYTEFEKLNIAKSYLKPKQIKRNALKSNELTIEDSVVTNIIRYYTREAGVRNLERELSKICRKCVKNLILNKSLKKIKITTDNLHDYLGIKKYDFGKTNYKNQIGQVIGLAWTEVGGELLTIEAACISGKGKLIYTGSLGEVMQESIQAALTVVRSQANKLGIKKNFYEKNDIHVHVPEGATPKDGPSAGIAMCTAIVSCLTGIPVKSDIAMTGEITLRGQILTIGGLKEKLLAAHRGGIKKVLIPYDNEKDLQEIPKTILKGLFVHPVKHIKEVLNLSLENTPYFSSK.

Residues 11–204 form the Lon N-terminal domain; it reads IPVLPLRDVV…RLMAIMESEI (194 aa). 356–363 contributes to the ATP binding site; the sequence is GPPGVGKT. The Lon proteolytic domain occupies 592–773; that stretch reads KNQIGQVIGL…KEVLNLSLEN (182 aa). Residues S679 and K722 contribute to the active site.

This sequence belongs to the peptidase S16 family. Homohexamer. Organized in a ring with a central cavity.

The protein localises to the cytoplasm. It catalyses the reaction Hydrolysis of proteins in presence of ATP.. Functionally, ATP-dependent serine protease that mediates the selective degradation of mutant and abnormal proteins as well as certain short-lived regulatory proteins. Required for cellular homeostasis and for survival from DNA damage and developmental changes induced by stress. Degrades polypeptides processively to yield small peptide fragments that are 5 to 10 amino acids long. Binds to DNA in a double-stranded, site-specific manner. The chain is Lon protease from Buchnera aphidicola subsp. Baizongia pistaciae (strain Bp).